We begin with the raw amino-acid sequence, 538 residues long: Chaperonin GroEL 2 (538 aa).

ATP is bound by residues T29–P32, D86–T90, G412, N479–A481, and D495.

It belongs to the chaperonin (HSP60) family. As to quaternary structure, forms a cylinder of 14 subunits composed of two heptameric rings stacked back-to-back. Interacts with the co-chaperonin GroES.

It is found in the cytoplasm. The enzyme catalyses ATP + H2O + a folded polypeptide = ADP + phosphate + an unfolded polypeptide.. Its function is as follows. Together with its co-chaperonin GroES, plays an essential role in assisting protein folding. The GroEL-GroES system forms a nano-cage that allows encapsulation of the non-native substrate proteins and provides a physical environment optimized to promote and accelerate protein folding. The chain is Chaperonin GroEL 2 from Renibacterium salmoninarum (strain ATCC 33209 / DSM 20767 / JCM 11484 / NBRC 15589 / NCIMB 2235).